Consider the following 83-residue polypeptide: Putative membrane protein insertion efficiency factor (83 aa).

The interval 62–83 (KGGYDPVPPKSVKSAGNSKDSK) is disordered.

This sequence belongs to the UPF0161 family.

Its subcellular location is the cell inner membrane. Could be involved in insertion of integral membrane proteins into the membrane. The chain is Putative membrane protein insertion efficiency factor from Chlorobaculum tepidum (strain ATCC 49652 / DSM 12025 / NBRC 103806 / TLS) (Chlorobium tepidum).